The primary structure comprises 101 residues: MAKKSKIVKNDRRRATVARYAERRAELKEIIRSPRSTPEQRTAAQNELAHQPRDASAVRVRNRDAVDGRPRGHLRKFGLSRVRVRELAHAGQLPGVRKASW.

Positions 29 to 60 are disordered; the sequence is EIIRSPRSTPEQRTAAQNELAHQPRDASAVRV. Residues 34-45 show a composition bias toward polar residues; the sequence is PRSTPEQRTAAQ.

This sequence belongs to the universal ribosomal protein uS14 family. In terms of assembly, part of the 30S ribosomal subunit. Contacts proteins S3 and S10.

In terms of biological role, binds 16S rRNA, required for the assembly of 30S particles and may also be responsible for determining the conformation of the 16S rRNA at the A site. This chain is Small ribosomal subunit protein uS14A, found in Mycolicibacterium paratuberculosis (strain ATCC BAA-968 / K-10) (Mycobacterium paratuberculosis).